The sequence spans 1440 residues: Gag-Pro-Pol polyprotein (1440 aa).

Gly-2 carries N-myristoyl glycine; by host lipidation. The disordered stretch occupies residues 93–117 (AREAPPSAPPADDPQKPPPYPEHAQ). The PTAP/PSAP motif motif lies at 98–101 (PSAP). Positions 98–113 (PSAPPADDPQKPPPYP) are enriched in pro residues. The short motif at 109 to 112 (PPPY) is the PPXY motif element. CCHC-type zinc fingers lie at residues 349-366 (QPCFRCGQAGHWSRDCKQ) and 372-389 (GPCPLCQDPAHWKQDCPQ). The Peptidase A2 domain maps to 457 to 535 (VQALLDTGAD…DQWTILGRDA (79 aa)). Residue Asp-462 is the For protease activity; shared with dimeric partner of the active site. The Reverse transcriptase domain maps to 593 to 783 (LEAKHIEPYQ…GSIHFLGQVI (191 aa)). Residues Asp-659, Asp-734, Asp-735, Asp-1019, Glu-1052, Asp-1074, Asp-1135, Asp-1208, and Asp-1265 each contribute to the Mg(2+) site. The RNase H type-1 domain maps to 1010–1143 (IDHAPCLFSD…TDALMLAPLL (134 aa)). Residues 1197–1366 (RGHAPNVIWQ…PSIPENTLPP (170 aa)) form the Integrase catalytic domain. Positions 1371 to 1420 (KWYYYKIPGLTNPRWSGPVQSLKEAAGAALIPVGGSHLWIPWRLLKRGIC) form a DNA-binding region, integrase-type.

As to quaternary structure, interacts with human TSG101. This interaction is essential for budding and release of viral particles. It depends on Mg(2+) as a cofactor. In terms of processing, specific enzymatic cleavages by the viral protease yield mature proteins. The polyprotein is cleaved during and after budding, this process is termed maturation. The protease is autoproteolytically processed at its N- and C-termini.

It is found in the virion. It carries out the reaction Endonucleolytic cleavage to 5'-phosphomonoester.. The enzyme catalyses DNA(n) + a 2'-deoxyribonucleoside 5'-triphosphate = DNA(n+1) + diphosphate. Functionally, matrix protein p19 targets Gag, Gag-Pro and Gag-Pro-Pol polyproteins to the plasma membrane via a multipartite membrane binding signal, that includes its myristoylated N-terminus. Also mediates nuclear localization of the preintegration complex. Its function is as follows. Capsid protein p24 forms the conical core of the virus that encapsulates the genomic RNA-nucleocapsid complex. In terms of biological role, nucleocapsid protein p15 is involved in the packaging and encapsidation of two copies of the genome. The aspartyl protease mediates proteolytic cleavages of Gag, Gag-Pro and Gag-Pro-Pol polyproteins during or shortly after the release of the virion from the plasma membrane. Cleavages take place as an ordered, step-wise cascade to yield mature proteins. This process is called maturation. Displays maximal activity during the budding process just prior to particle release from the cell. Hydrolyzes host EIF4GI in order to shut off the capped cellular mRNA translation. The resulting inhibition of cellular protein synthesis serves to ensure maximal viral gene expression and to evade host immune response. Functionally, reverse transcriptase (RT) is a multifunctional enzyme that converts the viral RNA genome into dsDNA in the cytoplasm, shortly after virus entry into the cell. This enzyme displays a DNA polymerase activity that can copy either DNA or RNA templates, and a ribonuclease H (RNase H) activity that cleaves the RNA strand of RNA-DNA heteroduplexes in a partially processive 3' to 5'-endonucleasic mode. Conversion of viral genomic RNA into dsDNA requires many steps. A tRNA-Pro binds to the primer-binding site (PBS) situated at the 5'-end of the viral RNA. RT uses the 3' end of the tRNA primer to perform a short round of RNA-dependent minus-strand DNA synthesis. The reading proceeds through the U5 region and ends after the repeated (R) region which is present at both ends of viral RNA. The portion of the RNA-DNA heteroduplex is digested by the RNase H, resulting in a ssDNA product attached to the tRNA primer. This ssDNA/tRNA hybridizes with the identical R region situated at the 3' end of viral RNA. This template exchange, known as minus-strand DNA strong stop transfer, can be either intra- or intermolecular. RT uses the 3' end of this newly synthesized short ssDNA to perform the RNA-dependent minus-strand DNA synthesis of the whole template. RNase H digests the RNA template except for a polypurine tract (PPT) situated at the 5' end of the genome. It is not clear if both polymerase and RNase H activities are simultaneous. RNase H probably can proceed both in a polymerase-dependent (RNA cut into small fragments by the same RT performing DNA synthesis) and a polymerase-independent mode (cleavage of remaining RNA fragments by free RTs). Secondly, RT performs DNA-directed plus-strand DNA synthesis using the PPT that has not been removed by RNase H as primer. PPT and tRNA primers are then removed by RNase H. The 3' and 5' ssDNA PBS regions hybridize to form a circular dsDNA intermediate. Strand displacement synthesis by RT to the PBS and PPT ends produces a blunt ended, linear dsDNA copy of the viral genome that includes long terminal repeats (LTRs) at both ends. Its function is as follows. Integrase catalyzes viral DNA integration into the host chromosome, by performing a series of DNA cutting and joining reactions. This enzyme activity takes place after virion entry into a cell and reverse transcription of the RNA genome in dsDNA. The first step in the integration process is 3' processing. This step requires a complex comprising the viral genome, matrix protein, and integrase. This complex is called the pre-integration complex (PIC). The integrase protein removes 2 nucleotides from each 3' end of the viral DNA, leaving recessed dinucleotides OH's at the 3' ends. In the second step, the PIC access cell chromosomes during cell division. The third step, termed strand transfer, the integrase protein joins the previously processed 3' ends to the 5'-ends of strands of target cellular DNA at the site of integration. The 5'-ends are produced by integrase-catalyzed staggered cuts, 5 bp apart. A Y-shaped, gapped, recombination intermediate results, with the 5'-ends of the viral DNA strands and the 3' ends of target DNA strands remaining unjoined, flanking a gap of 5 bp. The last step is viral DNA integration into host chromosome. This involves host DNA repair synthesis in which the 5 bp gaps between the unjoined strands (see above) are filled in and then ligated. The polypeptide is Gag-Pro-Pol polyprotein (gag-pro-pol) (Human T-cell leukemia virus 3 (strain Pyl43) (HTLV-3)).